A 373-amino-acid polypeptide reads, in one-letter code: Unsaturated rhamnogalacturonyl hydrolase YteR (373 aa).

Substrate-binding positions include 40-41 (HY), Asp-88, and 132-136 (HKDGY). The active-site Proton donor is Asp-143. Substrate-binding positions include 213–217 (RSIGW) and 333–334 (TS).

This sequence belongs to the glycosyl hydrolase 105 family. In terms of assembly, monomer.

The protein resides in the cytoplasm. It catalyses the reaction 2-O-(4-deoxy-beta-L-threo-hex-4-enopyranuronosyl)-alpha-L-rhamnose + H2O = 5-dehydro-4-deoxy-D-glucuronate + L-rhamnopyranose. In terms of biological role, catalyzes the hydrolysis of unsaturated rhamnogalacturonan disaccharide to yield unsaturated D-galacturonic acid and L-rhamnose. It cannot act on unsaturated glucuronyl hydrolase (UGL) substrates containing unsaturated D-glucuronic acid at the non-reducing terminus, although the active pockets of YesR and UGL are very similar. The polypeptide is Unsaturated rhamnogalacturonyl hydrolase YteR (yteR) (Bacillus subtilis (strain 168)).